Here is a 403-residue protein sequence, read N- to C-terminus: Phosphopentomutase (403 aa).

The Mn(2+) site is built by Asp-13, Asp-298, His-303, Asp-339, His-340, and His-351.

This sequence belongs to the phosphopentomutase family. Requires Mn(2+) as cofactor.

The protein resides in the cytoplasm. The catalysed reaction is 2-deoxy-alpha-D-ribose 1-phosphate = 2-deoxy-D-ribose 5-phosphate. It catalyses the reaction alpha-D-ribose 1-phosphate = D-ribose 5-phosphate. The protein operates within carbohydrate degradation; 2-deoxy-D-ribose 1-phosphate degradation; D-glyceraldehyde 3-phosphate and acetaldehyde from 2-deoxy-alpha-D-ribose 1-phosphate: step 1/2. Its function is as follows. Isomerase that catalyzes the conversion of deoxy-ribose 1-phosphate (dRib-1-P) and ribose 1-phosphate (Rib-1-P) to deoxy-ribose 5-phosphate (dRib-5-P) and ribose 5-phosphate (Rib-5-P), respectively. This Streptococcus pyogenes serotype M12 (strain MGAS2096) protein is Phosphopentomutase.